A 268-amino-acid chain; its full sequence is Minor capsid protein VP2 (268 aa).

Positions 132-144 (STPQSLGALTGRT) are enriched in polar residues. A disordered region spans residues 132 to 199 (STPQSLGALT…SLSSAARTRS (68 aa)). Over residues 145 to 163 (NSRVSAPARSSPSALSNAP) the composition is skewed to low complexity. Residues 164–178 (TATSLHSNQTVSTRL) are compositionally biased toward polar residues. Residues 179–195 (GSSAGSGTGVSSLSSAA) are compositionally biased toward low complexity.

It belongs to the norovirus VP2 family. Homooligomer. The portal-like structure consists in 12 copies of VP2. Interacts with capsid protein VP1.

The protein resides in the virion. It is found in the host cytoplasm. Functionally, minor structural protein that forms a portal-like structure at a unique three-fold axis of symmetry, following binding to the host receptor. The channel formed by VP2 may allow the delivery of the viral genome through the host endosomal membrane. The protein is Minor capsid protein VP2 of Lordsdale virus (strain GII/Human/United Kingdom/Lordsdale/1993) (Human enteric calicivirus).